We begin with the raw amino-acid sequence, 337 residues long: uncharacterized protein (337 aa).

The Cytoplasmic segment spans residues 1–10 (MKLKINIRPN). A helical transmembrane segment spans residues 11–31 (EIIFLICIVVIFSFSYTLTYF). The Extracellular segment spans residues 32 to 100 (DSPIFKEHYI…LEKLFSFSDN (69 aa)). A helical membrane pass occupies residues 101 to 121 (ILIVLIIVQVIVGFLIFLLSV). Residues 122-197 (EKLSKCNYQL…KILIIKKKRD (76 aa)) are Cytoplasmic-facing. Positions 148–167 (NNNNEDINNNNNNNNNNNNK) are enriched in low complexity. The disordered stretch occupies residues 148-179 (NNNNEDINNNNNNNNNNNNKNKNDERNNEEIE). The helical transmembrane segment at 198 to 218 (ILLAIIIFFLVLLGVLTIIYV) threads the bilayer. Over 219 to 285 (SFIPLNIRKA…SWSLDSGLFN (67 aa)) the chain is Extracellular. Residues 286–306 (VKIVFFSTILIEFLTGCLILL) form a helical membrane-spanning segment. The Cytoplasmic portion of the chain corresponds to 307-337 (MKFKKDPNIVPLTKPSIASPTQIPHLFCIAK).

The protein localises to the membrane. This is an uncharacterized protein from Dictyostelium discoideum (Social amoeba).